We begin with the raw amino-acid sequence, 446 residues long: Nuclear distribution protein PAC1-1 (446 aa).

One can recognise a LisH domain in the interval 9–41 (QAEELHKSLIAYLSSINASQSVTTLREELQIGD). Residues 60–86 (ISVVRLQKRILDLESKIASLQAELDSA) are a coiled coil. WD repeat units follow at residues 112–153 (SHRG…RTLK), 155–195 (HTRT…ANIR), 199–239 (GHDH…CVKT), 242–281 (TQGDWVRDVFPSFDGKWLVSGGRDQAATIWEVSSGEARAS), 284–344 (GHEN…IKTL), 346–385 (GHNNWVRGLVFHPGGKYLFSVGDDKTIRCWDLSQEGKLVK), 390–430 (AHEH…TGFR), and 432–446 (VIATGSADSCVRVFM).

This sequence belongs to the WD repeat LIS1/nudF family. Self-associates. Interacts with NDL1 and dynein.

It is found in the cytoplasm. The protein localises to the cytoskeleton. It localises to the spindle pole. Its function is as follows. Positively regulates the activity of the minus-end directed microtubule motor protein dynein. May enhance dynein-mediated microtubule sliding by targeting dynein to the microtubule plus end. Required for nuclear migration during vegetative growth as well as development. Required for retrograde early endosome (EE) transport from the hyphal tip. Required for localization of dynein to the mitotic spindle poles. Recruits additional proteins to the dynein complex at SPBs. This is Nuclear distribution protein PAC1-1 from Uncinocarpus reesii (strain UAMH 1704).